Consider the following 82-residue polypeptide: DNA-directed RNA polymerase subunit omega (82 aa).

Belongs to the RNA polymerase subunit omega family. As to quaternary structure, the RNAP catalytic core consists of 2 alpha, 1 beta, 1 beta' and 1 omega subunit. When a sigma factor is associated with the core the holoenzyme is formed, which can initiate transcription.

It carries out the reaction RNA(n) + a ribonucleoside 5'-triphosphate = RNA(n+1) + diphosphate. In terms of biological role, promotes RNA polymerase assembly. Latches the N- and C-terminal regions of the beta' subunit thereby facilitating its interaction with the beta and alpha subunits. The polypeptide is DNA-directed RNA polymerase subunit omega (Lacticaseibacillus casei (strain BL23) (Lactobacillus casei)).